The following is a 338-amino-acid chain: Aspartate-semialdehyde dehydrogenase (338 aa).

NADP(+) is bound by residues 9–12 (TGQV) and 37–38 (RS). Position 93 (arginine 93) interacts with phosphate. Cysteine 123 serves as the catalytic Acyl-thioester intermediate. Glutamine 150 is a binding site for substrate. 153–154 (SG) is an NADP(+) binding site. Lysine 220 is a phosphate binding site. Arginine 242 contributes to the substrate binding site. Catalysis depends on histidine 249, which acts as the Proton acceptor. Position 316 (asparagine 316) interacts with NADP(+).

This sequence belongs to the aspartate-semialdehyde dehydrogenase family. Homodimer.

It carries out the reaction L-aspartate 4-semialdehyde + phosphate + NADP(+) = 4-phospho-L-aspartate + NADPH + H(+). It participates in amino-acid biosynthesis; L-lysine biosynthesis via DAP pathway; (S)-tetrahydrodipicolinate from L-aspartate: step 2/4. The protein operates within amino-acid biosynthesis; L-methionine biosynthesis via de novo pathway; L-homoserine from L-aspartate: step 2/3. It functions in the pathway amino-acid biosynthesis; L-threonine biosynthesis; L-threonine from L-aspartate: step 2/5. In terms of biological role, catalyzes the NADPH-dependent formation of L-aspartate-semialdehyde (L-ASA) by the reductive dephosphorylation of L-aspartyl-4-phosphate. The polypeptide is Aspartate-semialdehyde dehydrogenase (Streptomyces akiyoshiensis).